The sequence spans 471 residues: Ubiquitin carboxyl-terminal hydrolase calypso (471 aa).

The region spanning 45 to 276 (GWLELESDPG…IRFNLMAVVP (232 aa)) is the UCH catalytic domain. Catalysis depends on Cys131, which acts as the Nucleophile. The Proton donor role is filled by His213. A disordered region spans residues 307–326 (DEQGESGNGDSQRPDTPTTL). The segment covering 314-326 (NGDSQRPDTPTTL) has biased composition (polar residues). Residues 375–403 (NYDKFICTFLSMLAHQGVLGELVSQHLLP) enclose the ULD domain. The positively charged C-terminal tail required for binding nucleosomes stretch occupies residues 405-471 (KKVSGQGAAN…KGRNKCRKRK (67 aa)). The segment at 412 to 471 (AANRISKQSNTASAGGSTTGASASTPKTQQQQAAAAKNGKSPSKTPGRRRKGRNKCRKRK) is disordered. The span at 422–447 (TASAGGSTTGASASTPKTQQQQAAAA) shows a compositional bias: low complexity. Positions 457-471 (PGRRRKGRNKCRKRK) are enriched in basic residues.

The protein belongs to the peptidase C12 family. BAP1 subfamily. Catalytic component of the polycomb repressive deubiquitinase (PR-DUB) complex, at least composed of caly/calypso, Asx and sba (MBD5/6 homolog). The PR-DUB complex associates with nucleosomes to mediate deubiquitination of histone H2AK118ub1 substrates; the association requires the positively charged C-terminal tail of caly, probably due to direct binding of DNA. Interacts (via ULD domain) with Asx (via DEUBAD domain); the interaction produces a stable heterodimer with a composite binding site for ubiquitin. Homodimerizes (via coiled-coil hinge-region between the UCH and ULD domains) to mediate assembly of 2 copies of the caly-Asx heterodimer into a bisymmetric tetramer; dimerization enhances PR-DUB association with nucleosomes.

Its subcellular location is the nucleus. The enzyme catalyses Thiol-dependent hydrolysis of ester, thioester, amide, peptide and isopeptide bonds formed by the C-terminal Gly of ubiquitin (a 76-residue protein attached to proteins as an intracellular targeting signal).. In terms of biological role, catalytic component of the polycomb repressive deubiquitinase (PR-DUB) complex, a complex that specifically mediates deubiquitination of histone H2A monoubiquitinated at 'Lys-119' (H2AK118ub1). Mediates bisymmetric organization of the PR-DUB complex and is involved in association with nucleosomes to mediate deubiquitination. Does not deubiquitinate monoubiquitinated histone H2B. Required to maintain the transcriptionally repressive state of homeotic genes throughout development. The PR-DUB complex has weak or no activity toward 'Lys-48'- and 'Lys-63'-linked polyubiquitin chains. Polycomb group (PcG) protein. The protein is Ubiquitin carboxyl-terminal hydrolase calypso of Drosophila sechellia (Fruit fly).